Consider the following 87-residue polypeptide: Phosphoribosyl-ATP pyrophosphatase (87 aa).

This sequence belongs to the PRA-PH family.

It is found in the cytoplasm. It carries out the reaction 1-(5-phospho-beta-D-ribosyl)-ATP + H2O = 1-(5-phospho-beta-D-ribosyl)-5'-AMP + diphosphate + H(+). It functions in the pathway amino-acid biosynthesis; L-histidine biosynthesis; L-histidine from 5-phospho-alpha-D-ribose 1-diphosphate: step 2/9. This is Phosphoribosyl-ATP pyrophosphatase from Bifidobacterium animalis subsp. lactis (strain AD011).